The chain runs to 515 residues: RNA exonuclease NGL2 (515 aa).

Disordered stretches follow at residues 1–54 (MTQD…SKPI) and 353–381 (RDGE…PVPE). Over residues 21–34 (EINKSVKDAKHQTN) the composition is skewed to basic and acidic residues. Residues 40–52 (QHKKKGKKGKKSK) are compositionally biased toward basic residues. Positions 369-381 (KYGKDQPESPVPE) are enriched in basic and acidic residues.

It belongs to the CCR4/nocturin family.

Its subcellular location is the cytoplasm. It is found in the nucleus. Its function is as follows. Involved in pre-rRNA processing. Required for the final stage of 3'-end maturation of 5.8S rRNA at site E. This is RNA exonuclease NGL2 (NGL2) from Saccharomyces cerevisiae (strain ATCC 204508 / S288c) (Baker's yeast).